Consider the following 463-residue polypeptide: Probable mannan endo-1,4-beta-mannosidase F (463 aa).

The first 18 residues, 1-18 (MRSLSSIALLSVVGAASA), serve as a signal peptide directing secretion. A CBM1 domain is found at 19 to 54 (QAGPWAQCGGKSFSGSSECASGWKCQELNEWFSQCV). Positions 57-78 (AESTTPTVSSTPTPTDAPSVSI) are disordered. Residues 59–77 (STTPTVSSTPTPTDAPSVS) show a composition bias toward low complexity. The segment at 75–118 (SVSITASVTTGINKSISVSSASKSTPLPSSSSASPSPRPTGSGS) is ser-rich linker. N-linked (GlcNAc...) asparagine glycosylation is present at asparagine 87. Over residues 93 to 118 (SSASKSTPLPSSSSASPSPRPTGSGS) the composition is skewed to low complexity. Residues 93–121 (SSASKSTPLPSSSSASPSPRPTGSGSFAK) are disordered. Positions 119 to 463 (FAKADGLQFS…MDHMENVNKN (345 aa)) are catalytic. Substrate contacts are provided by tryptophan 171 and asparagine 285. Catalysis depends on glutamate 286, which acts as the Proton donor/acceptor. Tyrosine 361 provides a ligand contact to substrate. The active-site Nucleophile is glutamate 395. Tryptophan 424 serves as a coordination point for substrate.

The protein belongs to the glycosyl hydrolase 5 (cellulase A) family.

The protein resides in the secreted. It carries out the reaction Random hydrolysis of (1-&gt;4)-beta-D-mannosidic linkages in mannans, galactomannans and glucomannans.. Functionally, endo-1,4-mannanase, a crucial enzyme for depolymerization of seed galactomannans and wood galactoglucomannans. The chain is Probable mannan endo-1,4-beta-mannosidase F (manF) from Aspergillus oryzae (strain ATCC 42149 / RIB 40) (Yellow koji mold).